A 262-amino-acid chain; its full sequence is Thrombin-like enzyme gyroxin B1.4 (262 aa).

The signal sequence occupies residues 1–18; that stretch reads MVLIRVLANLLILQLSYA. Residues 19 to 262 constitute a propeptide that is removed on maturation; it reads QKSSELVIGG…AGNTIVNCPP (244 aa). The Peptidase S1 domain occupies 25-253; the sequence is VIGGDECNIN…HLDWIQSIIA (229 aa). 6 cysteine pairs are disulfide-bonded: Cys-31-Cys-165, Cys-52-Cys-68, Cys-102-Cys-260, Cys-144-Cys-214, Cys-176-Cys-193, and Cys-204-Cys-229. His-67 serves as the catalytic Charge relay system. A glycan (N-linked (GlcNAc...) asparagine) is linked at Asn-105. Residue Asp-112 is the Charge relay system of the active site. Ser-208 (charge relay system) is an active-site residue.

Belongs to the peptidase S1 family. Snake venom subfamily. Monomer. Expressed by the venom gland.

Its subcellular location is the secreted. Thrombin-like snake venom serine protease. Displays a specificity similar to trypsin. Releases only fibrinopeptide A in the conversion of fibrinogen to fibrin. Shows coagulant, esterase and amidase activities. Reversibly increases the permeability of the blood brain barrier (BBB) in mice. Induces the barrel rotation syndrome in mice, which is manifested by gyroxin-like, rapid rolling motions. This syndrome may be due to its effect on BBB permeability, and certainly also to other actions affecting endogenous substrates present in the endothelium, nervous tissues or blood. The polypeptide is Thrombin-like enzyme gyroxin B1.4 (Crotalus durissus terrificus (South American rattlesnake)).